Consider the following 103-residue polypeptide: Co-chaperonin GroES (103 aa).

Belongs to the GroES chaperonin family. As to quaternary structure, heptamer of 7 subunits arranged in a ring. Interacts with the chaperonin GroEL.

The protein localises to the cytoplasm. Its function is as follows. Together with the chaperonin GroEL, plays an essential role in assisting protein folding. The GroEL-GroES system forms a nano-cage that allows encapsulation of the non-native substrate proteins and provides a physical environment optimized to promote and accelerate protein folding. GroES binds to the apical surface of the GroEL ring, thereby capping the opening of the GroEL channel. The sequence is that of Co-chaperonin GroES from Thermosynechococcus vestitus (strain NIES-2133 / IAM M-273 / BP-1).